The chain runs to 160 residues: Ribosomal RNA large subunit methyltransferase H (160 aa).

S-adenosyl-L-methionine-binding positions include Leu76, Gly108, and 127-132; that span reads LGELTW.

This sequence belongs to the RNA methyltransferase RlmH family. As to quaternary structure, homodimer.

The protein resides in the cytoplasm. It catalyses the reaction pseudouridine(1915) in 23S rRNA + S-adenosyl-L-methionine = N(3)-methylpseudouridine(1915) in 23S rRNA + S-adenosyl-L-homocysteine + H(+). Functionally, specifically methylates the pseudouridine at position 1915 (m3Psi1915) in 23S rRNA. The sequence is that of Ribosomal RNA large subunit methyltransferase H from Brucella anthropi (strain ATCC 49188 / DSM 6882 / CCUG 24695 / JCM 21032 / LMG 3331 / NBRC 15819 / NCTC 12168 / Alc 37) (Ochrobactrum anthropi).